A 171-amino-acid chain; its full sequence is MRAFLIGRWQPFHKGHLEIIKKISAEVDEIIVGIGSCQKSHTLTDPFTAGERMMMITKTLENYDINYYAIPIIDIDYNAVWVSSVESLTPPFTTIYTGNSLVRELFSERNYVVKKPELYNRTDYSGTKIRKKMLEGSAWEHLVPEEVVKVIEEIDGINRIRRLSEKDYDEE.

The protein belongs to the archaeal NMN adenylyltransferase family.

It localises to the cytoplasm. It carries out the reaction beta-nicotinamide D-ribonucleotide + ATP + H(+) = diphosphate + NAD(+). Its pathway is cofactor biosynthesis; NAD(+) biosynthesis; NAD(+) from nicotinamide D-ribonucleotide: step 1/1. This chain is Nicotinamide-nucleotide adenylyltransferase, found in Methanococcus maripaludis (strain DSM 14266 / JCM 13030 / NBRC 101832 / S2 / LL).